A 434-amino-acid chain; its full sequence is Enolase (434 aa).

Glutamine 168 serves as a coordination point for (2R)-2-phosphoglycerate. The Proton donor role is filled by glutamate 210. Mg(2+) is bound by residues aspartate 247, glutamate 292, and aspartate 319. Residues lysine 344, arginine 373, serine 374, and lysine 395 each coordinate (2R)-2-phosphoglycerate. Lysine 344 serves as the catalytic Proton acceptor.

The protein belongs to the enolase family. Mg(2+) serves as cofactor.

It is found in the cytoplasm. It localises to the secreted. The protein resides in the cell surface. It catalyses the reaction (2R)-2-phosphoglycerate = phosphoenolpyruvate + H2O. The protein operates within carbohydrate degradation; glycolysis; pyruvate from D-glyceraldehyde 3-phosphate: step 4/5. Catalyzes the reversible conversion of 2-phosphoglycerate (2-PG) into phosphoenolpyruvate (PEP). It is essential for the degradation of carbohydrates via glycolysis. The polypeptide is Enolase (Endomicrobium trichonymphae).